The following is a 365-amino-acid chain: Peptide chain release factor 2 (365 aa).

The residue at position 251 (Gln-251) is an N5-methylglutamine.

This sequence belongs to the prokaryotic/mitochondrial release factor family. Post-translationally, methylated by PrmC. Methylation increases the termination efficiency of RF2.

The protein resides in the cytoplasm. Functionally, peptide chain release factor 2 directs the termination of translation in response to the peptide chain termination codons UGA and UAA. The protein is Peptide chain release factor 2 of Sulfurimonas denitrificans (strain ATCC 33889 / DSM 1251) (Thiomicrospira denitrificans (strain ATCC 33889 / DSM 1251)).